A 386-amino-acid polypeptide reads, in one-letter code: 3-ketosteroid-9-alpha-monooxygenase, oxygenase component (386 aa).

One can recognise a Rieske domain in the interval 26–128 (WHCLGVAKDY…TDVRSGLLFV (103 aa)). Positions 67, 69, 86, and 89 each coordinate [2Fe-2S] cluster. Fe cation contacts are provided by asparagine 175, histidine 181, histidine 186, and aspartate 304.

Homotrimer. The two-component system 3-ketosteroid-9-alpha-monooxygenase is composed of an oxygenase component KshA and a reductase component KshB. It depends on [2Fe-2S] cluster as a cofactor. Requires Fe cation as cofactor.

The enzyme catalyses androsta-1,4-diene-3,17-dione + 2 reduced [2Fe-2S]-[ferredoxin] + O2 + 2 H(+) = 9alpha-hydroxyandrosta-1,4-diene-3,17-dione + 2 oxidized [2Fe-2S]-[ferredoxin] + H2O. It catalyses the reaction androst-4-ene-3,17-dione + NADH + O2 + H(+) = 9alpha-hydroxy-androst-4-ene-3,17-dione + NAD(+) + H2O. The catalysed reaction is 3-oxochol-4-en-22-oate + NADH + O2 + H(+) = 9alpha-hydroxy-3-oxochol-4-en-22-oate + NAD(+) + H2O. It carries out the reaction 3-oxochola-1,4-dien-22-oate + NADH + O2 + H(+) = 9alpha-hydroxy-3-oxochola-1,4-dien-22-oate + NAD(+) + H2O. The enzyme catalyses 3-oxochol-4-en-22-oyl-CoA + NADH + O2 + H(+) = 9alpha-hydroxy-3-oxochol-4-en-22-oyl-CoA + NAD(+) + H2O. It catalyses the reaction 3-oxochola-1,4-dien-22-oyl-CoA + NADH + O2 + H(+) = 9alpha-hydroxy-3-oxochola-1,4-dien-22-oyl-CoA + NAD(+) + H2O. The protein operates within lipid metabolism; steroid biosynthesis. Its function is as follows. Involved in the degradation of cholesterol. Catalyzes the introduction of a 9a-hydroxyl moiety into 1,4-androstadiene-3,17-dione (ADD) to yield the 9alpha-hydroxy-1,4-androstadiene-3,17-dione (9OHADD) intermediate which spontaneously form 3-hydroxy-9,10-seconandrost-1,3,5(10)-triene-9,17-dione (HSA) via the meta-cleavage of ring B with concomitant aromatization of ring A. KSH is also able to use 4-androstene-3,17-dione (AD), 3-oxo-23,24-bisnorcholesta-4-en-22-oate (4-BNC), 3-oxo-23,24-bisnorcholesta-1,4-dien-22-oate (1,4-BNC), 3-oxo-23,24-bisnorcholesta-4-en-22-oyl-coenzyme A thioester (4-BNC-CoA) and 3-oxo-23,24-bisnorcholesta-1,4-dien-22-oyl-coenzyme A thioester (1,4-BNC-CoA) as substrates. The chain is 3-ketosteroid-9-alpha-monooxygenase, oxygenase component (kshA) from Mycobacterium tuberculosis (strain ATCC 25618 / H37Rv).